The chain runs to 278 residues: Large ribosomal subunit protein uL2 (278 aa).

Positions 212-278 are disordered; it reads NRHRGIRPQT…IISRKKHKKG (67 aa). Basic residues predominate over residues 257 to 278; sequence YKTRKKKASDKLIISRKKHKKG.

The protein belongs to the universal ribosomal protein uL2 family. In terms of assembly, part of the 50S ribosomal subunit. Forms a bridge to the 30S subunit in the 70S ribosome.

In terms of biological role, one of the primary rRNA binding proteins. Required for association of the 30S and 50S subunits to form the 70S ribosome, for tRNA binding and peptide bond formation. It has been suggested to have peptidyltransferase activity; this is somewhat controversial. Makes several contacts with the 16S rRNA in the 70S ribosome. The protein is Large ribosomal subunit protein uL2 of Helicobacter pylori (strain Shi470).